A 620-amino-acid polypeptide reads, in one-letter code: Cilia- and flagella-associated protein 52 (620 aa).

11 WD repeats span residues Gly62–Arg106, Leu109–Gly150, Leu156–Trp195, Gln288–Ile327, Cys330–Arg369, Val372–Thr411, Ala415–Glu454, Glu459–Met498, Leu500–Glu541, Ser543–Val582, and Gly585–Ser620.

This sequence belongs to the CFAP52 family. As to quaternary structure, microtubule inner protein component of sperm flagellar doublet microtubules. Interacts with BRCA2. Interacts with the CCT chaperonin complex. Interacts with HSP70. Interacts with AK8. Interacts with CFAP45. Interacts with DNAI1. Interacts with IQDC.

The protein localises to the cytoplasm. Its subcellular location is the cytoskeleton. It is found in the cilium axoneme. The protein resides in the flagellum axoneme. Its function is as follows. Microtubule inner protein (MIP) part of the dynein-decorated doublet microtubules (DMTs) in cilia axoneme. Important for proper ciliary and flagellar beating. May act in cooperation with CFAP45 and axonemal dynein subunit DNAH11. May play a role in cell growth and/or survival. The protein is Cilia- and flagella-associated protein 52 of Mus musculus (Mouse).